The following is a 122-amino-acid chain: Large ribosomal subunit protein uL14c (122 aa).

Belongs to the universal ribosomal protein uL14 family. In terms of assembly, part of the 50S ribosomal subunit.

It localises to the plastid. Its subcellular location is the chloroplast. Functionally, binds to 23S rRNA. This chain is Large ribosomal subunit protein uL14c, found in Populus trichocarpa (Western balsam poplar).